Reading from the N-terminus, the 475-residue chain is Chromosomal replication initiator protein DnaA (475 aa).

A domain I, interacts with DnaA modulators region spans residues 1-73 (MTNSEQERWS…LSCWQAEMPE (73 aa)). A domain II region spans residues 73–131 (EVHRIDLSVRTAMRCATPAKEAPVAVEARRAERGDAKPADTRAPVMTPVAASHDALGGS). A domain III, AAA+ region region spans residues 132–354 (PLDPRLTFAS…GAINRLLAHS (223 aa)). Positions 179, 181, 182, and 183 each coordinate ATP. The tract at residues 355–475 (KLNNQPVTLD…VEALKRQLQD (121 aa)) is domain IV, binds dsDNA.

The protein belongs to the DnaA family. Oligomerizes as a right-handed, spiral filament on DNA at oriC.

It localises to the cytoplasm. Plays an essential role in the initiation and regulation of chromosomal replication. ATP-DnaA binds to the origin of replication (oriC) to initiate formation of the DNA replication initiation complex once per cell cycle. Binds the DnaA box (a 9 base pair repeat at the origin) and separates the double-stranded (ds)DNA. Forms a right-handed helical filament on oriC DNA; dsDNA binds to the exterior of the filament while single-stranded (ss)DNA is stabiized in the filament's interior. The ATP-DnaA-oriC complex binds and stabilizes one strand of the AT-rich DNA unwinding element (DUE), permitting loading of DNA polymerase. After initiation quickly degrades to an ADP-DnaA complex that is not apt for DNA replication. Binds acidic phospholipids. The chain is Chromosomal replication initiator protein DnaA from Bradyrhizobium sp. (strain BTAi1 / ATCC BAA-1182).